Here is a 646-residue protein sequence, read N- to C-terminus: Envelope glycoprotein (646 aa).

The signal sequence occupies residues 1 to 25 (MLSVAQSSALFLLQAICILYITKLT). Residues 26 to 119 (IPTPVSEINL…INYLLRFISA (94 aa)) are Lumenal-facing. Asparagine 72, asparagine 80, and asparagine 101 each carry an N-linked (GlcNAc...) asparagine; by host glycan. Residues 120 to 140 (IIVYLLLSISKQGIFLFFSIV) form a helical membrane-spanning segment. Residues 141-176 (HYSFKFIKNKKSCNICGNDFYFIHIDCPKPDFTKRS) are Cytoplasmic-facing. Residues 177 to 197 (DFHMMFYIILFLSLFFVVTHA) form a helical membrane-spanning segment. The Lumenal segment spans residues 198–588 (DDNVYNYYEH…KNLLYIDYKK (391 aa)). 2 N-linked (GlcNAc...) asparagine; by host glycosylation sites follow: asparagine 247 and asparagine 336. Residues 589 to 609 (IIFVFLVAIISIGIFLRSPYM) traverse the membrane as a helical segment. The Cytoplasmic segment spans residues 610-646 (LLSSILKFRKRRKVVATNRSEQLVMDDDVDVFIGPPS).

G2 and G1 interact with each other. In terms of processing, specific enzymatic cleavages in vivo yield mature proteins including glycoprotein G1 and glycoprotein G2. Post-translationally, glycosylated. Glycosylation is essential for proper subcellular location.

The protein resides in the virion membrane. Its subcellular location is the host Golgi apparatus membrane. Functionally, glycoprotein G2 and glycoprotein G1 interact with each other and are present at the surface of the virion. They are able to attach the virion to a cell receptor and to promote fusion of membranes after endocytosis of the virion. In European mountain ash ringspot-associated virus (isolate Sorbus aucuparia) (EMARAV), this protein is Envelope glycoprotein.